A 434-amino-acid polypeptide reads, in one-letter code: MASAQEDLIDYEEEEELVQDQPAQEITPAADTAENGEKSDKKGSYVGIHSTGFRDFLLKPELLRAITDSGFEHPSEVQQVCIPQSILGTDVLCQAKSGMGKTAVFVLSTLQQIEPVDGEVSVLVLCHTRELAFQIKNEYARFSKYLPDVRTAVFYGGINIKQDMEAFKDKSKSPHIVVATPGRLNALVREKILKVNSVKHFVLDECDKLLESVDMRRDIQEVFRATPPQKQVMMFSATLSNEIRPICKKFMQNPLEIYVDDETKLTLHGLQQHYVKLEEKAKNRKINDLLDSLEFNQVVIFVKSVSRANELDRLLRECNFPSICIHGGLPQEERIKRYKAFKDFDKRICVATDVFGRGIDIERVNIVINYDMPDSPDSYLHRVGRAGRFGTKGLAITFSSSEEDSQILDKIQERFEVNITELPDEIDVGSYMNA.

The disordered stretch occupies residues 1 to 43 (MASAQEDLIDYEEEEELVQDQPAQEITPAADTAENGEKSDKKG). A compositionally biased stretch (acidic residues) spans 7 to 18 (DLIDYEEEEELV). Residues 51-79 (TGFRDFLLKPELLRAITDSGFEHPSEVQQ) carry the Q motif motif. One can recognise a Helicase ATP-binding domain in the interval 82 to 257 (IPQSILGTDV…KKFMQNPLEI (176 aa)). 95–102 (AKSGMGKT) is an ATP binding site. Positions 204-207 (DECD) match the DECD box motif. A Helicase C-terminal domain is found at 269-430 (GLQQHYVKLE…ELPDEIDVGS (162 aa)).

It belongs to the DEAD box helicase family. DECD subfamily. As to quaternary structure, interacts with mlo3 and rae1.

It localises to the nucleus. It catalyses the reaction ATP + H2O = ADP + phosphate + H(+). Functionally, ATP-binding RNA helicase involved in transcription elongation and required for the export of mRNA out of the nucleus. SUB2 also plays a role in pre-mRNA splicing and spliceosome assembly. May be involved in rDNA and telomeric silencing, and maintenance of genome integrity. Links the mRNA adapter mlo3 to rae1 for targeting mRNA-protein complex to the proteins of the nucleoporin complex (NPC). The polypeptide is ATP-dependent RNA helicase uap56 (uap56) (Schizosaccharomyces pombe (strain 972 / ATCC 24843) (Fission yeast)).